Here is a 597-residue protein sequence, read N- to C-terminus: Membrane protein insertase YidC (597 aa).

A helical transmembrane segment spans residues 8–28 (YFVAIALSVLILIAWQFFYVS). Positions 38–75 (AEKAQQAQSQPGTQQAAPGQAAPGQALPGGAIPSAAES) are disordered. The span at 41–70 (AQQAQSQPGTQQAAPGQAAPGQALPGGAIP) shows a compositional bias: low complexity. A run of 4 helical transmembrane segments spans residues 372–392 (LFGN…LIFF), 446–466 (WPIL…YVTI), 491–511 (LFGL…WPIV), and 535–555 (FTWM…GLVI).

This sequence belongs to the OXA1/ALB3/YidC family. Type 1 subfamily. As to quaternary structure, interacts with the Sec translocase complex via SecD. Specifically interacts with transmembrane segments of nascent integral membrane proteins during membrane integration.

It localises to the cell inner membrane. In terms of biological role, required for the insertion and/or proper folding and/or complex formation of integral membrane proteins into the membrane. Involved in integration of membrane proteins that insert both dependently and independently of the Sec translocase complex, as well as at least some lipoproteins. Aids folding of multispanning membrane proteins. In Sinorhizobium medicae (strain WSM419) (Ensifer medicae), this protein is Membrane protein insertase YidC.